The chain runs to 394 residues: Probable fatty acid methyltransferase (394 aa).

S-adenosyl-L-methionine is bound by residues 128 to 129, 163 to 171, and 189 to 194; these read YS, LLDVGCGWG, and TLSKEQ. Cysteine 358 is a catalytic residue.

The protein belongs to the CFA/CMAS family.

The protein is Probable fatty acid methyltransferase of Pseudomonas putida (Arthrobacter siderocapsulatus).